We begin with the raw amino-acid sequence, 604 residues long: Elongation factor 4 (604 aa).

A tr-type G domain is found at 7-189 (SKIRNFCIIA…SIVHLVPPPS (183 aa)). GTP contacts are provided by residues 19–24 (DHGKST) and 136–139 (NKID).

It belongs to the TRAFAC class translation factor GTPase superfamily. Classic translation factor GTPase family. LepA subfamily.

It is found in the cell inner membrane. The catalysed reaction is GTP + H2O = GDP + phosphate + H(+). Functionally, required for accurate and efficient protein synthesis under certain stress conditions. May act as a fidelity factor of the translation reaction, by catalyzing a one-codon backward translocation of tRNAs on improperly translocated ribosomes. Back-translocation proceeds from a post-translocation (POST) complex to a pre-translocation (PRE) complex, thus giving elongation factor G a second chance to translocate the tRNAs correctly. Binds to ribosomes in a GTP-dependent manner. This Synechococcus elongatus (strain ATCC 33912 / PCC 7942 / FACHB-805) (Anacystis nidulans R2) protein is Elongation factor 4.